A 221-amino-acid polypeptide reads, in one-letter code: 2,3-bisphosphoglycerate-dependent phosphoglycerate mutase (221 aa).

Substrate-binding positions include 8 to 15, 21 to 22, Arg60, 87 to 90, Lys98, 114 to 115, and 174 to 175; these read RHGNSLWN, TG, ERHY, RR, and GN. The active-site Tele-phosphohistidine intermediate is His9. Glu87 functions as the Proton donor/acceptor in the catalytic mechanism. The interval 114-140 is disordered; it reads RRGYDTPPPPLHSQADDPRYEEPPPLS.

The protein belongs to the phosphoglycerate mutase family. BPG-dependent PGAM subfamily.

It carries out the reaction (2R)-2-phosphoglycerate = (2R)-3-phosphoglycerate. The protein operates within carbohydrate degradation; glycolysis; pyruvate from D-glyceraldehyde 3-phosphate: step 3/5. Its function is as follows. Catalyzes the interconversion of 2-phosphoglycerate and 3-phosphoglycerate. In Tropheryma whipplei (strain TW08/27) (Whipple's bacillus), this protein is 2,3-bisphosphoglycerate-dependent phosphoglycerate mutase.